Consider the following 504-residue polypeptide: Catalase (504 aa).

Residues His-56 and Asn-129 contribute to the active site. Residue Tyr-339 coordinates heme.

The protein belongs to the catalase family. As to quaternary structure, homodimer. Heme serves as cofactor.

The enzyme catalyses 2 H2O2 = O2 + 2 H2O. Decomposes hydrogen peroxide into water and oxygen; serves to protect cells from the toxic effects of hydrogen peroxide. The sequence is that of Catalase (katA) from Staphylococcus epidermidis.